Reading from the N-terminus, the 321-residue chain is Methionyl-tRNA formyltransferase (321 aa).

112-115 (GLLP) serves as a coordination point for (6S)-5,6,7,8-tetrahydrofolate.

The protein belongs to the Fmt family.

It catalyses the reaction L-methionyl-tRNA(fMet) + (6R)-10-formyltetrahydrofolate = N-formyl-L-methionyl-tRNA(fMet) + (6S)-5,6,7,8-tetrahydrofolate + H(+). Its function is as follows. Attaches a formyl group to the free amino group of methionyl-tRNA(fMet). The formyl group appears to play a dual role in the initiator identity of N-formylmethionyl-tRNA by promoting its recognition by IF2 and preventing the misappropriation of this tRNA by the elongation apparatus. The protein is Methionyl-tRNA formyltransferase of Chlamydia caviae (strain ATCC VR-813 / DSM 19441 / 03DC25 / GPIC) (Chlamydophila caviae).